We begin with the raw amino-acid sequence, 208 residues long: U11/U12 small nuclear ribonucleoprotein 35 kDa protein (208 aa).

An RRM domain is found at 50-128 (LTLFVARLNP…YELLVDVEQE (79 aa)). A disordered region spans residues 133 to 208 (GWRPRRLGGG…TEDRTHRHTY (76 aa)). Positions 171-208 (RPAEPRGRETERERDRRDYRDRRHERTHTEDRTHRHTY) are enriched in basic and acidic residues.

The protein resides in the nucleus. The polypeptide is U11/U12 small nuclear ribonucleoprotein 35 kDa protein (snrnp35) (Danio rerio (Zebrafish)).